A 467-amino-acid chain; its full sequence is Probable Xaa-Pro aminopeptidase pepP (467 aa).

D264, D275, E398, and E438 together coordinate Mn(2+).

Belongs to the peptidase M24B family. Mn(2+) is required as a cofactor.

The enzyme catalyses Release of any N-terminal amino acid, including proline, that is linked to proline, even from a dipeptide or tripeptide.. Catalyzes the removal of a penultimate prolyl residue from the N-termini of peptides. In Neosartorya fischeri (strain ATCC 1020 / DSM 3700 / CBS 544.65 / FGSC A1164 / JCM 1740 / NRRL 181 / WB 181) (Aspergillus fischerianus), this protein is Probable Xaa-Pro aminopeptidase pepP (pepP).